The primary structure comprises 272 residues: 2-dehydro-3-deoxyphosphooctonate aldolase (272 aa).

The protein belongs to the KdsA family.

It localises to the cytoplasm. It carries out the reaction D-arabinose 5-phosphate + phosphoenolpyruvate + H2O = 3-deoxy-alpha-D-manno-2-octulosonate-8-phosphate + phosphate. Its pathway is carbohydrate biosynthesis; 3-deoxy-D-manno-octulosonate biosynthesis; 3-deoxy-D-manno-octulosonate from D-ribulose 5-phosphate: step 2/3. It functions in the pathway bacterial outer membrane biogenesis; lipopolysaccharide biosynthesis. This is 2-dehydro-3-deoxyphosphooctonate aldolase from Geobacter metallireducens (strain ATCC 53774 / DSM 7210 / GS-15).